The chain runs to 331 residues: MVQQAVIQRSANQQLSNQRSANQRATNQPTEYVGRFAPSPSGDLHFGSLIAALGSYLQARAQGGKWLVRIEDIDPPREVPGAASRILAALEHYGLHWDGPVIYQSQRHEAYRATLNWLEQQGLSYYCTCTRSRIHQLGGFYDGYCRDRHLPASGAAIRLRQTQPVYAFYDKLLGELHAHPALAQEDFIIRRRDGLFAYNLAVVVDDAFQGVTEIVRGADLIEPTVRQIALYQQLQHPVPSYIHLPLALNNQGNKLSKQNHAPPLPNGDPRPILIDALKFLRQPLPEYWQDLDLYLLLRYAVEHWTLVSIPLQGAITPQKTQRHSQSKHGEL.

Polar residues predominate over residues 1 to 30; sequence MVQQAVIQRSANQQLSNQRSANQRATNQPT. Residues 1-36 are disordered; it reads MVQQAVIQRSANQQLSNQRSANQRATNQPTEYVGRF. Residues 35-39 and E71 contribute to the L-glutamate site; that span reads RFAPS. The 'HIGH' region signature appears at 38-48; it reads PSPSGDLHFGS. Residues C127, C129, Y141, and C145 each coordinate Zn(2+). L-glutamate-binding residues include Y198 and R216. Positions 254–258 match the 'KMSKS' region motif; sequence KLSKQ. Residue K257 participates in ATP binding.

Belongs to the class-I aminoacyl-tRNA synthetase family. GluQ subfamily. Requires Zn(2+) as cofactor.

Its function is as follows. Catalyzes the tRNA-independent activation of glutamate in presence of ATP and the subsequent transfer of glutamate onto a tRNA(Asp). Glutamate is transferred on the 2-amino-5-(4,5-dihydroxy-2-cyclopenten-1-yl) moiety of the queuosine in the wobble position of the QUC anticodon. The polypeptide is Glutamyl-Q tRNA(Asp) synthetase (Yersinia pseudotuberculosis serotype I (strain IP32953)).